Consider the following 376-residue polypeptide: General transcription factor IIH subunit 2 (376 aa).

The region spanning 64-206 (HVMIVIDCSR…NIRCSAIGLS (143 aa)) is the VWFA domain. The C4-type zinc finger occupies 286–303 (CTQCGARHCSIPAECPVC).

Belongs to the GTF2H2 family. As to quaternary structure, component of the 7-subunit TFIIH core complex composed of xpb-1, xpd-1, gtf-2H1, gtf-2H2C, gtf-2H3, Y73F8A.24 and gtf-2H5, which is active in NER. The core complex associates with the 3-subunit CDK-activating kinase (CAK) module composed of cyh-1, cdk-7 and mnat-1 to form the 10-subunit holoenzyme (holo-TFIIH) active in transcription.

It is found in the nucleus. Functionally, component of the general transcription and DNA repair factor IIH (TFIIH) core complex, which is involved in general and transcription-coupled nucleotide excision repair (NER) of damaged DNA and, when complexed to CAK, in RNA transcription by RNA polymerase II. In NER, TFIIH acts by opening DNA around the lesion to allow the excision of the damaged oligonucleotide and its replacement by a new DNA fragment. In transcription, TFIIH has an essential role in transcription initiation. When the pre-initiation complex (PIC) has been established, TFIIH is required for promoter opening and promoter escape. Phosphorylation of the C-terminal tail (CTD) of the largest subunit of RNA polymerase II by the kinase module CAK controls the initiation of transcription. The sequence is that of General transcription factor IIH subunit 2 from Caenorhabditis elegans.